The primary structure comprises 991 residues: uncharacterized protein (991 aa).

A signal peptide spans 1-17; the sequence is MLWPAALVAMFALAARA. 6 disordered regions span residues 332–352, 392–425, 469–511, 542–569, 587–641, and 658–734; these read DPLPRAPDYSYPTDDPAGETT, TTEDLTQETSTPTVTTVIDPTSGAVTTESRTTEG, EDST…EDTT, DTEAAQSATSISDAVTPEDLTPETTTPV, PAPT…NSLS, and ASSG…PPRI. The segment covering 400–413 has biased composition (low complexity); the sequence is TSTPTVTTVIDPTS. The span at 414–425 shows a compositional bias: polar residues; it reads GAVTTESRTTEG. Low complexity predominate over residues 472 to 493; that stretch reads TTTARAAEYPTPTTTTVEPRPA. A compositionally biased stretch (polar residues) spans 542–554; the sequence is DTEAAQSATSISD. 2 stretches are compositionally biased toward low complexity: residues 556-569 and 598-615; these read VTPEDLTPETTTPV and ASTTPAPTATAVPTSHTP. Composition is skewed to polar residues over residues 617-628 and 658-667; these read PQESTSTPSRAP and ASSGPGASTG. Residues 668–682 show a composition bias toward low complexity; it reads ATTAPISPPWSASPA. Positions 686-710 are enriched in polar residues; that stretch reads VTTSAARTLEPSSTRKAVAAESTTA.

This is an uncharacterized protein from Psittacid herpesvirus 1 (isolate Amazon parrot/-/97-0001/1997) (PsHV-1).